Reading from the N-terminus, the 253-residue chain is DNA repair protein RecO (253 aa).

The protein belongs to the RecO family.

In terms of biological role, involved in DNA repair and RecF pathway recombination. The protein is DNA repair protein RecO of Symbiobacterium thermophilum (strain DSM 24528 / JCM 14929 / IAM 14863 / T).